Consider the following 238-residue polypeptide: uncharacterized protein (238 aa).

5 consecutive transmembrane segments (helical) span residues 6–26 (METL…ALMI), 45–65 (FILL…FFIL), 98–118 (IPIL…IGYI), 160–180 (IFGT…GYLL), and 186–206 (IVLC…LVGA).

Belongs to the TMEM19 family.

Its subcellular location is the cell membrane. This is an uncharacterized protein from Methanocaldococcus jannaschii (strain ATCC 43067 / DSM 2661 / JAL-1 / JCM 10045 / NBRC 100440) (Methanococcus jannaschii).